We begin with the raw amino-acid sequence, 218 residues long: Large ribosomal subunit protein uL2c (218 aa).

Positions Gly-165–Pro-192 are disordered.

This sequence belongs to the universal ribosomal protein uL2 family. Part of the 50S ribosomal subunit.

The protein resides in the plastid. It is found in the chloroplast. This Bigelowiella natans (Pedinomonas minutissima) protein is Large ribosomal subunit protein uL2c (rpl2).